The sequence spans 415 residues: Stimulator of interferon genes protein (415 aa).

The 135-residue stretch at 29-163 folds into the TIR domain; sequence HVYHAFISYC…DIIQAISKPE (135 aa). The active site involves Glu104. 2',3'-cGAMP is bound at residue Arg256. The segment at 387–415 is disordered; it reads KSPSSTNMVKSEPNIYREESGKTKSVERG. Positions 401–415 are enriched in basic and acidic residues; it reads IYREESGKTKSVERG.

In the N-terminal section; belongs to the Toll-like receptor family. This sequence in the C-terminal section; belongs to the TMEM173 family. In terms of assembly, homodimer.

It carries out the reaction NAD(+) + H2O = ADP-D-ribose + nicotinamide + H(+). Sensor of cytosolic DNA from bacteria and viruses that promotes autophagy. Binds c-di-AMP, 2'3'-cGAMP, 3'3'-cGAMP and to a lesser extent c-di-GMP. Nucleotide binding has not been seen to stimulate NAD(+) hydrolase activity. This chain is Stimulator of interferon genes protein, found in Magallana gigas (Pacific oyster).